Here is a 173-residue protein sequence, read N- to C-terminus: MSTNNTQDDAAEEEDDDLQYFVRIGTTDLDGTKAVERSLTDMKGIGKRTARIITDVASVDRHATFGLLEEDEIDSITDAVENLDDHIPGWMTNRREDFFSGDTDHKTGADLEEKRRHDVNRMKMIDSYKGVRHKRGQKVRGQRTKSTGRTEGTIGVNVEAIKEEAAEAAEEEE.

The span at 130–143 shows a compositional bias: basic residues; sequence GVRHKRGQKVRGQR. The interval 130 to 155 is disordered; sequence GVRHKRGQKVRGQRTKSTGRTEGTIG.

It belongs to the universal ribosomal protein uS13 family. Part of the 30S ribosomal subunit. Forms a loose heterodimer with protein S19. Forms two bridges to the 50S subunit in the 70S ribosome.

Functionally, located at the top of the head of the 30S subunit, it contacts several helices of the 16S rRNA. In the 70S ribosome it contacts the 23S rRNA (bridge B1a) and protein L5 of the 50S subunit (bridge B1b), connecting the 2 subunits; these bridges are implicated in subunit movement. This is Small ribosomal subunit protein uS13 from Haloquadratum walsbyi (strain DSM 16790 / HBSQ001).